A 303-amino-acid polypeptide reads, in one-letter code: E3 ubiquitin-protein ligase CCNB1IP1 homolog (303 aa).

Residues 3–42 (CNACWRELEGQAVSTTCGHLLCTEDAKKILSNDAACPICD) form an RING-type; degenerate zinc finger. Residues 119–184 (LEEVHTAYQK…YESAKRSAIQ (66 aa)) are a coiled coil. The segment at 201–268 (VPNIMDSSDP…DIRPRQPARP (68 aa)) is disordered.

As to quaternary structure, interacts with ZIP4 and PTD. As to expression, expressed in young panicles.

It localises to the nucleus. It is found in the chromosome. It catalyses the reaction S-ubiquitinyl-[E2 ubiquitin-conjugating enzyme]-L-cysteine + [acceptor protein]-L-lysine = [E2 ubiquitin-conjugating enzyme]-L-cysteine + N(6)-ubiquitinyl-[acceptor protein]-L-lysine.. It functions in the pathway protein modification; protein ubiquitination. Its function is as follows. Ubiquitin E3 ligase required for class I crossover (CO) formation during meiosis. The polypeptide is E3 ubiquitin-protein ligase CCNB1IP1 homolog (Oryza sativa subsp. japonica (Rice)).